The sequence spans 304 residues: Methionyl-tRNA formyltransferase (304 aa).

109-112 (SDLP) provides a ligand contact to (6S)-5,6,7,8-tetrahydrofolate.

This sequence belongs to the Fmt family.

It carries out the reaction L-methionyl-tRNA(fMet) + (6R)-10-formyltetrahydrofolate = N-formyl-L-methionyl-tRNA(fMet) + (6S)-5,6,7,8-tetrahydrofolate + H(+). Attaches a formyl group to the free amino group of methionyl-tRNA(fMet). The formyl group appears to play a dual role in the initiator identity of N-formylmethionyl-tRNA by promoting its recognition by IF2 and preventing the misappropriation of this tRNA by the elongation apparatus. The protein is Methionyl-tRNA formyltransferase of Rickettsia bellii (strain RML369-C).